The following is a 1016-amino-acid chain: Coiled-coil domain-containing protein 57 (1016 aa).

Positions 1–503 are centrosomal targeting domain; sequence MLPLCSEREL…HGLLPGQEAQ (503 aa). Coiled-coil stretches lie at residues 14 to 607, 676 to 700, and 748 to 775; these read LARK…PVKT, SEVDQVHLEVLELQKQVAELRKHLK, and VTHLQRKLKDAARKILSLRLEREQLLEM. 2 disordered regions span residues 500–519 and 549–573; these read QEAQVPPQQHEGEIRADSPS and HLPPAQPEECSNADPDPKAGGDSTP. Positions 604–1016 are microtubule binding domain; that stretch reads PVKTSVATAD…SRIRNYNLKD (413 aa). Disordered regions lie at residues 781–921 and 933–1016; these read AEQG…LASS and GSSP…NLKD. Composition is skewed to polar residues over residues 846–859 and 934–945; these read QPHSAQVGSKTNTP and SSPSGVPSQDNS.

In terms of assembly, interacts with CEP63; the interaction is required for their location to proximal end of centrioles. Interacts with microtubules.

It localises to the cytoplasm. Its subcellular location is the cytoskeleton. It is found in the microtubule organizing center. The protein localises to the centrosome. The protein resides in the centriolar satellite. It localises to the centriole. Its subcellular location is the spindle. Its function is as follows. Pleiotropic regulator of centriole duplication, mitosis, and ciliogenesis. Critical interface between centrosome and microtubule-mediated cellular processes. Centriole duplication protein required for recruitment of CEP63, CEP152, and PLK4 to the centrosome. Independent of its centrosomal targeting, localizes to and interacts with microtubules and regulates microtubule nucleation, stability, and mitotic progression. This Mus musculus (Mouse) protein is Coiled-coil domain-containing protein 57.